Here is a 299-residue protein sequence, read N- to C-terminus: Elongation factor Ts, mitochondrial (299 aa).

A mitochondrion-targeting transit peptide spans 1 to 18 (MLFQRRLHFHQFFGKTRV).

Belongs to the EF-Ts family.

Its subcellular location is the mitochondrion. In terms of biological role, associates with the EF-Tu.GDP complex and induces the exchange of GDP to GTP. It remains bound to the aminoacyl-tRNA.EF-Tu.GTP complex up to the GTP hydrolysis stage on the ribosome. In Schizosaccharomyces pombe (strain 972 / ATCC 24843) (Fission yeast), this protein is Elongation factor Ts, mitochondrial (tsf1).